The primary structure comprises 652 residues: MATSMGLLLLLLLLLTQPGAGTGADTEAVVCVGTACYTAHSGKLSAAEAQNHCNQNGGNLATVKSKEEAQHVQRVLAQLLRREAALTARMSKFWIGLQREKGKCLDPSLPLKGFSWVGGGEDTPYSNWHKELRNSCISKRCVSLLLDLSQPLLPSRLPKWSEGPCGSPGSPGSNIEGFVCKFSFKGMCRPLALGGPGQVTYTTPFQTTSSSLEAVPFASAANVACGEGDKDETQSHYFLCKEKAPDVFDWGSSGPLCVSPKYGCNFNNGGCHQDCFEGGDGSFLCGCRPGFRLLDDLVTCASRNPCSSSPCRGGATCVLGPHGKNYTCRCPQGYQLDSSQLDCVDVDECQDSPCAQECVNTPGGFRCECWVGYEPGGPGEGACQDVDECALGRSPCAQGCTNTDGSFHCSCEEGYVLAGEDGTQCQDVDECVGPGGPLCDSLCFNTQGSFHCGCLPGWVLAPNGVSCTMGPVSLGPPSGPPDEEDKGEKEGSTVPRAATASPTRGPEGTPKATPTTSRPSLSSDAPITSAPLKMLAPSGSPGVWREPSIHHATAASGPQEPAGGDSSVATQNNDGTDGQKLLLFYILGTVVAILLLLALALGLLVYRKRRAKREEKKEKKPQNAADSYSWVPERAESRAMENQYSPTPGTDC.

The N-terminal stretch at 1-21 is a signal peptide; that stretch reads MATSMGLLLLLLLLLTQPGAG. Residues 24–580 are Extracellular-facing; that stretch reads ADTEAVVCVG…QNNDGTDGQK (557 aa). One can recognise a C-type lectin domain in the interval 32-174; sequence VGTACYTAHS…CGSPGSPGSN (143 aa). Disulfide bonds link C141-C165, C264-C275, C271-C285, C287-C300, C306-C317, C311-C328, C330-C343, C349-C358, C354-C367, C369-C383, C389-C400, C396-C409, C411-C425, C431-C443, C439-C452, and C454-C467. EGF-like domains are found at residues 260-301 and 302-344; these read PKYG…VTCA and SRNP…LDCV. Residue N325 is glycosylated (N-linked (GlcNAc...) asparagine). The 40-residue stretch at 345-384 folds into the EGF-like 3; calcium-binding domain; that stretch reads DVDECQDSPCAQECVNTPGGFRCECWVGYEPGGPGEGACQ. Residues 385 to 426 enclose the EGF-like 4; calcium-binding domain; sequence DVDECALGRSPCAQGCTNTDGSFHCSCEEGYVLAGEDGTQCQ. An EGF-like 5; calcium-binding domain is found at 427 to 468; that stretch reads DVDECVGPGGPLCDSLCFNTQGSFHCGCLPGWVLAPNGVSCT. Disordered stretches follow at residues 472-546 and 553-572; these read VSLG…VWRE and TAAS…ATQN. Residues 512-526 show a composition bias toward polar residues; that stretch reads ATPTTSRPSLSSDAP. Residues 581–601 form a helical membrane-spanning segment; it reads LLLFYILGTVVAILLLLALAL. Residues 602–652 lie on the Cytoplasmic side of the membrane; sequence GLLVYRKRRAKREEKKEKKPQNAADSYSWVPERAESRAMENQYSPTPGTDC. Residues 611 to 652 are disordered; sequence AKREEKKEKKPQNAADSYSWVPERAESRAMENQYSPTPGTDC. The segment covering 612–621 has biased composition (basic and acidic residues); sequence KREEKKEKKP. A Phosphoserine modification is found at S627. Phosphotyrosine occurs at positions 628 and 644. The span at 640–652 shows a compositional bias: polar residues; that stretch reads MENQYSPTPGTDC.

Homodimer. Interacts with C1QBP; the association may represent a cell surface C1q receptor. Interacts with surfactant protein A/SFTPA1. Interacts with multimerin-2/MMRN2. Interacts with DAG1; this interaction plays an important role in endothelial cell migration. Interacts with CBL. Interacts with IGFBP7. Interacts with VEGFR2. As to quaternary structure, (Microbial infection) Interacts with hepatitis virus C/HCV core protein. Post-translationally, N- and O-glycosylated. Phosphorylated on Tyr-628 and Tyr-644 by SRC; these phosphorylations promote endothelial cell adhesion and migration. Highly expressed in endothelial cells, platelets, cells of myeloid origin, such as monocytes and neutrophils. Not expressed in cells of lymphoid origin.

The protein localises to the cell membrane. In terms of biological role, cell surface receptor that plays a role in various physiological processes including inflammation, phagocytosis, and cell adhesion. Plays a role in phagocytosis and enhances the uptake of apoptotic cells and immune complexes by acting as a receptor for defense collagens including surfactant protein A/SFTPA1, C1q, and mannose-binding lectin (MBL2). Plays a role in the regulation of endothelial cell function and adhesion by activating angiogenesis. Mechanistically, exerts its angiogenic function by associating with beta-dystroglycan, leading to SRC-dependent phosphorylation and subsequent recruitment of CBL. In turn, CBL provides a docking site for downstream signaling components, such as CRKL to enhance cell migration. Participates in angiogenesis also by acting as a receptor for the ECM pan-endothelial glycoprotein multimerin-2/MMRN2 and IGFBP7 ligands. Both ligands play a non-redundant role in CD93-mediated endothelial cell function. Acts as a key regulator of endothelial barrier function through modulating VEGFR2 function. The sequence is that of Complement component C1q receptor (CD93) from Homo sapiens (Human).